The chain runs to 147 residues: Leghemoglobin-1 (147 aa).

One can recognise a Globin domain in the interval 2–147 (SFTDKQEALV…LATAIKKAMS (146 aa)). Nitrated tyrosine is present on residues tyrosine 25 and tyrosine 30. Serine 45 serves as a coordination point for heme b. Phosphoserine is present on serine 45. Histidine 62 contributes to the O2 binding site. Positions 65, 94, and 97 each coordinate heme b. Tyrosine 135 bears the Nitrated tyrosine mark.

It belongs to the plant globin family. Monomer. Nitrated in effective nodules and particularly in hypoxic conditions; this mechanism may play a protective role in the symbiosis by buffering toxic peroxynitrite NO(2)(-). Nitration level decrease during nodule senescence. In terms of processing, phosphorylation at Ser-45 disrupts the molecular environment of its porphyrin ring oxygen binding pocket, thus leading to a reduced oxygen consumption and to the delivery of oxygen O(2) to symbiosomes. Root nodules.

The protein resides in the cytoplasm. The protein localises to the cytosol. It is found in the nucleus. Leghemoglobin that reversibly binds oxygen O(2) through a pentacoordinated heme iron. In root nodules, facilitates the diffusion of oxygen to the bacteroids while preventing the bacterial nitrogenase from being inactivated by buffering dioxygen, nitric oxide and carbon monoxide, and promoting the formation of reactive oxygen species (ROS, e.g. H(2)O(2)). This role is essential for symbiotic nitrogen fixation (SNF). The sequence is that of Leghemoglobin-1 from Medicago sativa (Alfalfa).